The following is a 159-amino-acid chain: Phosphopantetheine adenylyltransferase (159 aa).

A substrate-binding site is contributed by Thr9. ATP is bound by residues 9-10 and His17; that span reads TF. Substrate is bound by residues Lys41, Leu73, and Arg87. ATP is bound by residues 88-90, Glu98, and 123-129; these read GLR and YMFISAT.

The protein belongs to the bacterial CoaD family. Homohexamer. Requires Mg(2+) as cofactor.

It localises to the cytoplasm. It carries out the reaction (R)-4'-phosphopantetheine + ATP + H(+) = 3'-dephospho-CoA + diphosphate. Its pathway is cofactor biosynthesis; coenzyme A biosynthesis; CoA from (R)-pantothenate: step 4/5. Its function is as follows. Reversibly transfers an adenylyl group from ATP to 4'-phosphopantetheine, yielding dephospho-CoA (dPCoA) and pyrophosphate. The chain is Phosphopantetheine adenylyltransferase from Nitrosomonas europaea (strain ATCC 19718 / CIP 103999 / KCTC 2705 / NBRC 14298).